Here is a 162-residue protein sequence, read N- to C-terminus: Endoribonuclease YbeY (162 aa).

Residues His-117, His-121, and His-127 each coordinate Zn(2+).

The protein belongs to the endoribonuclease YbeY family. Zn(2+) serves as cofactor.

Its subcellular location is the cytoplasm. Functionally, single strand-specific metallo-endoribonuclease involved in late-stage 70S ribosome quality control and in maturation of the 3' terminus of the 16S rRNA. The chain is Endoribonuclease YbeY from Francisella tularensis subsp. tularensis (strain WY96-3418).